Here is a 211-residue protein sequence, read N- to C-terminus: Thymidylate kinase (211 aa).

7-14 lines the ATP pocket; sequence GIDASGKS.

It belongs to the thymidylate kinase family.

It carries out the reaction dTMP + ATP = dTDP + ADP. Its function is as follows. Phosphorylation of dTMP to form dTDP in both de novo and salvage pathways of dTTP synthesis. This chain is Thymidylate kinase, found in Mesomycoplasma hyopneumoniae (strain 232) (Mycoplasma hyopneumoniae).